A 240-amino-acid chain; its full sequence is 2,3,4,5-tetrahydropyridine-2,6-dicarboxylate N-acetyltransferase (240 aa).

Belongs to the transferase hexapeptide repeat family. DapH subfamily.

It catalyses the reaction (S)-2,3,4,5-tetrahydrodipicolinate + acetyl-CoA + H2O = L-2-acetamido-6-oxoheptanedioate + CoA. It functions in the pathway amino-acid biosynthesis; L-lysine biosynthesis via DAP pathway; LL-2,6-diaminopimelate from (S)-tetrahydrodipicolinate (acetylase route): step 1/3. Its function is as follows. Catalyzes the transfer of an acetyl group from acetyl-CoA to tetrahydrodipicolinate. In Bacillus cytotoxicus (strain DSM 22905 / CIP 110041 / 391-98 / NVH 391-98), this protein is 2,3,4,5-tetrahydropyridine-2,6-dicarboxylate N-acetyltransferase.